A 610-amino-acid polypeptide reads, in one-letter code: UvrABC system protein C (610 aa).

One can recognise a GIY-YIG domain in the interval 16-94 (SQPGVYRMYD…IKLYQPRYNV (79 aa)). The 36-residue stretch at 204–239 (DQVLTQLIARMEKASQDLAFEEAARIRDQIQAVRRV) folds into the UVR domain.

It belongs to the UvrC family. Interacts with UvrB in an incision complex.

It localises to the cytoplasm. In terms of biological role, the UvrABC repair system catalyzes the recognition and processing of DNA lesions. UvrC both incises the 5' and 3' sides of the lesion. The N-terminal half is responsible for the 3' incision and the C-terminal half is responsible for the 5' incision. The sequence is that of UvrABC system protein C from Salmonella typhimurium (strain LT2 / SGSC1412 / ATCC 700720).